The chain runs to 341 residues: UDP-glucose 4-epimerase (341 aa).

The protein belongs to the polysaccharide synthase family.

It carries out the reaction UDP-alpha-D-glucose = UDP-alpha-D-galactose. Epimerizes UDP-galactose to UDP-glucose. The sequence is that of UDP-glucose 4-epimerase (capD) from Rickettsia conorii (strain ATCC VR-613 / Malish 7).